Here is a 171-residue protein sequence, read N- to C-terminus: Shikimate kinase (171 aa).

14–19 (GAGKST) provides a ligand contact to ATP. Ser-18 is a Mg(2+) binding site. Residues Asp-36, Arg-60, and Gly-82 each coordinate substrate. Arg-120 contacts ATP. Arg-139 lines the substrate pocket. Gln-156 provides a ligand contact to ATP.

This sequence belongs to the shikimate kinase family. In terms of assembly, monomer. The cofactor is Mg(2+).

It is found in the cytoplasm. The catalysed reaction is shikimate + ATP = 3-phosphoshikimate + ADP + H(+). Its pathway is metabolic intermediate biosynthesis; chorismate biosynthesis; chorismate from D-erythrose 4-phosphate and phosphoenolpyruvate: step 5/7. In terms of biological role, catalyzes the specific phosphorylation of the 3-hydroxyl group of shikimic acid using ATP as a cosubstrate. This is Shikimate kinase from Shewanella sp. (strain ANA-3).